The chain runs to 349 residues: ATPase GET3 (349 aa).

Residue 27-34 (KGGVGKTT) coordinates ATP. Aspartate 58 is an active-site residue. Glutamate 240 and asparagine 267 together coordinate ATP. Cysteine 280 and cysteine 283 together coordinate Zn(2+).

It belongs to the arsA ATPase family. In terms of assembly, homodimer. Component of the Golgi to ER traffic (GET) complex, which is composed of GET1, GET2 and GET3. Within the complex, GET1 and GET2 form a heterotetramer which is stabilized by phosphatidylinositol binding and which binds to the GET3 homodimer. Interacts with the chloride channel protein GEF1.

The protein localises to the cytoplasm. It is found in the endoplasmic reticulum. It localises to the golgi apparatus. ATPase required for the post-translational delivery of tail-anchored (TA) proteins to the endoplasmic reticulum. Recognizes and selectively binds the transmembrane domain of TA proteins in the cytosol. This complex then targets to the endoplasmic reticulum by membrane-bound receptors GET1 and GET2, where the tail-anchored protein is released for insertion. This process is regulated by ATP binding and hydrolysis. ATP binding drives the homodimer towards the closed dimer state, facilitating recognition of newly synthesized TA membrane proteins. ATP hydrolysis is required for insertion. Subsequently, the homodimer reverts towards the open dimer state, lowering its affinity for the GET1-GET2 receptor, and returning it to the cytosol to initiate a new round of targeting. Cooperates with the HDEL receptor ERD2 to mediate the ATP-dependent retrieval of resident ER proteins that contain a C-terminal H-D-E-L retention signal from the Golgi to the ER. Involved in low-level resistance to the oxyanions arsenite and arsenate, and in heat tolerance. The polypeptide is ATPase GET3 (Eremothecium gossypii (strain ATCC 10895 / CBS 109.51 / FGSC 9923 / NRRL Y-1056) (Yeast)).